The chain runs to 154 residues: MAAASAMAEASSETTSEEGQSIQEPKEANSTKAQKQKRRGCRGSRRRHANRRGDSFGDSFTPYFPRVLKQVHQGLSLSQEAVSVMDSMIHDILDRIATEAGQLAHYTKRVTITSRDIQMAVRLLLPGKMGKLAEAQGTNAALRTSLCAIWQQRK.

The span at 1–18 (MAAASAMAEASSETTSEE) shows a compositional bias: low complexity. A disordered region spans residues 1-61 (MAAASAMAEA…RGDSFGDSFT (61 aa)). Residues 34–50 (QKQKRRGCRGSRRRHAN) are compositionally biased toward basic residues.

This sequence belongs to the histone H2B family. As to quaternary structure, the nucleosome is a histone octamer containing two molecules each of H2A, H2B, H3 and H4 assembled in one H3-H4 heterotetramer and two H2A-H2B heterodimers. The octamer wraps approximately 147 bp of DNA.

The protein localises to the nucleus. The protein resides in the chromosome. In terms of biological role, core component of nucleosome. Nucleosomes wrap and compact DNA into chromatin, limiting DNA accessibility to the cellular machineries which require DNA as a template. Histones thereby play a central role in transcription regulation, DNA repair, DNA replication and chromosomal stability. DNA accessibility is regulated via a complex set of post-translational modifications of histones, also called histone code, and nucleosome remodeling. This Homo sapiens (Human) protein is Histone H2B type F-M.